Here is a 257-residue protein sequence, read N- to C-terminus: Imidazole glycerol phosphate synthase subunit HisF (257 aa).

Residues Asp11 and Asp130 contribute to the active site.

It belongs to the HisA/HisF family. As to quaternary structure, heterodimer of HisH and HisF.

Its subcellular location is the cytoplasm. The catalysed reaction is 5-[(5-phospho-1-deoxy-D-ribulos-1-ylimino)methylamino]-1-(5-phospho-beta-D-ribosyl)imidazole-4-carboxamide + L-glutamine = D-erythro-1-(imidazol-4-yl)glycerol 3-phosphate + 5-amino-1-(5-phospho-beta-D-ribosyl)imidazole-4-carboxamide + L-glutamate + H(+). It participates in amino-acid biosynthesis; L-histidine biosynthesis; L-histidine from 5-phospho-alpha-D-ribose 1-diphosphate: step 5/9. IGPS catalyzes the conversion of PRFAR and glutamine to IGP, AICAR and glutamate. The HisF subunit catalyzes the cyclization activity that produces IGP and AICAR from PRFAR using the ammonia provided by the HisH subunit. This Shewanella sp. (strain W3-18-1) protein is Imidazole glycerol phosphate synthase subunit HisF.